Consider the following 132-residue polypeptide: Large ribosomal subunit protein uL14 (132 aa).

The protein belongs to the universal ribosomal protein uL14 family. As to quaternary structure, part of the 50S ribosomal subunit. Forms a cluster with proteins L3 and L24e, part of which may contact the 16S rRNA in 2 intersubunit bridges.

In terms of biological role, binds to 23S rRNA. Forms part of two intersubunit bridges in the 70S ribosome. This is Large ribosomal subunit protein uL14 from Methanospirillum hungatei JF-1 (strain ATCC 27890 / DSM 864 / NBRC 100397 / JF-1).